A 240-amino-acid polypeptide reads, in one-letter code: Spore coat polysaccharide biosynthesis protein SpsF (240 aa).

This sequence belongs to the CMP-NeuNAc synthase family.

The protein operates within spore coat biogenesis; spore coat polysaccharide biosynthesis. This is Spore coat polysaccharide biosynthesis protein SpsF (spsF) from Bacillus subtilis (strain 168).